Here is a 469-residue protein sequence, read N- to C-terminus: Adenosylhomocysteinase (469 aa).

3 residues coordinate substrate: threonine 63, aspartate 139, and glutamate 164. An NAD(+)-binding site is contributed by 165-167 (TTT). Positions 194 and 198 each coordinate substrate. Residues asparagine 199, 228–233 (GYGDVG), glutamate 251, asparagine 300, 321–323 (IGH), and asparagine 375 contribute to the NAD(+) site.

The protein belongs to the adenosylhomocysteinase family. Requires NAD(+) as cofactor.

It is found in the cytoplasm. The catalysed reaction is S-adenosyl-L-homocysteine + H2O = L-homocysteine + adenosine. Its pathway is amino-acid biosynthesis; L-homocysteine biosynthesis; L-homocysteine from S-adenosyl-L-homocysteine: step 1/1. May play a key role in the regulation of the intracellular concentration of adenosylhomocysteine. The sequence is that of Adenosylhomocysteinase from Ectopseudomonas mendocina (strain ymp) (Pseudomonas mendocina).